Reading from the N-terminus, the 101-residue chain is Interleukin-8 (101 aa).

A signal peptide spans 1–22; the sequence is MTSKLAVALLAAFVLSAALCEA. A Citrulline modification is found at Arg27. Disulfide bonds link Cys34–Cys61 and Cys36–Cys77.

The protein belongs to the intercrine alpha (chemokine CxC) family. Homodimer. Interacts with TNFAIP6 (via Link domain); this interaction interferes with chemokine binding to glycosaminoglycans. Citrullination at Arg-27 prevents proteolysis, and dampens tissue inflammation, it also enhances leukocytosis, possibly through impaired chemokine clearance from the blood circulation.

The protein localises to the secreted. In terms of biological role, chemotactic factor that mediates inflammatory response by attracting neutrophils, basophils, and T-cells to clear pathogens and protect the host from infection. Also plays an important role in neutrophil activation. Released in response to an inflammatory stimulus, exerts its effect by binding to the G-protein-coupled receptors CXCR1 and CXCR2, primarily found in neutrophils, monocytes and endothelial cells. G-protein heterotrimer (alpha, beta, gamma subunits) constitutively binds to CXCR1/CXCR2 receptor and activation by IL8 leads to beta and gamma subunits release from Galpha (GNAI2 in neutrophils) and activation of several downstream signaling pathways including PI3K and MAPK pathways. In Canis lupus familiaris (Dog), this protein is Interleukin-8 (CXCL8).